Reading from the N-terminus, the 123-residue chain is Heat-labile enterotoxin IIA, B chain (123 aa).

An N-terminal signal peptide occupies residues 1–19 (MSSKKIIGAFVLMTGILSG). Cys-33 and Cys-104 are disulfide-bonded.

Heterohexamer of one A chain and of five B chains.

In terms of biological role, the biological activity of the toxin is produced by the A chain, which activates intracellular adenyl cyclase. This Escherichia coli protein is Heat-labile enterotoxin IIA, B chain.